A 436-amino-acid polypeptide reads, in one-letter code: GTPase Der (436 aa).

EngA-type G domains are found at residues P4–E167 and I175–N351. Residues G10 to S17, D57 to I61, N119 to D122, G181 to S188, D229 to M233, and N294 to D297 contribute to the GTP site. A KH-like domain is found at K352–K436.

The protein belongs to the TRAFAC class TrmE-Era-EngA-EngB-Septin-like GTPase superfamily. EngA (Der) GTPase family. As to quaternary structure, associates with the 50S ribosomal subunit.

In terms of biological role, GTPase that plays an essential role in the late steps of ribosome biogenesis. This Streptococcus agalactiae serotype Ia (strain ATCC 27591 / A909 / CDC SS700) protein is GTPase Der.